Reading from the N-terminus, the 79-residue chain is MKTLLLTLVVMTIVCLDLGYTLTCYMNPSGTMVCKEHETMCYQLIVWTFQYRVLYLKGCTSSCPGGNNRACCSTDLCNN.

Positions 1-23 (MKTLLLTLVVMTIVCLDLGYTLT) are cleaved as a signal peptide. 4 disulfides stabilise this stretch: Cys-24–Cys-41, Cys-34–Cys-59, Cys-63–Cys-71, and Cys-72–Cys-77.

The protein belongs to the three-finger toxin family. Short-chain subfamily. In terms of tissue distribution, expressed by the venom gland.

Its subcellular location is the secreted. This is Short neurotoxin 3 from Oxyuranus scutellatus scutellatus (Australian taipan).